We begin with the raw amino-acid sequence, 103 residues long: uncharacterized protein (103 aa).

The helical transmembrane segment at 37-57 (FILLSSLLIGGLLITIACYHI) threads the bilayer.

Its subcellular location is the membrane. This is an uncharacterized protein from Saccharomyces cerevisiae (strain ATCC 204508 / S288c) (Baker's yeast).